The primary structure comprises 222 residues: 2-C-methyl-D-erythritol 4-phosphate cytidylyltransferase (222 aa).

It belongs to the IspD/TarI cytidylyltransferase family. IspD subfamily.

The enzyme catalyses 2-C-methyl-D-erythritol 4-phosphate + CTP + H(+) = 4-CDP-2-C-methyl-D-erythritol + diphosphate. The protein operates within isoprenoid biosynthesis; isopentenyl diphosphate biosynthesis via DXP pathway; isopentenyl diphosphate from 1-deoxy-D-xylulose 5-phosphate: step 2/6. Functionally, catalyzes the formation of 4-diphosphocytidyl-2-C-methyl-D-erythritol from CTP and 2-C-methyl-D-erythritol 4-phosphate (MEP). The polypeptide is 2-C-methyl-D-erythritol 4-phosphate cytidylyltransferase (Thermotoga neapolitana (strain ATCC 49049 / DSM 4359 / NBRC 107923 / NS-E)).